Consider the following 179-residue polypeptide: Large ribosomal subunit protein uL5 (179 aa).

This sequence belongs to the universal ribosomal protein uL5 family. Part of the 50S ribosomal subunit; part of the 5S rRNA/L5/L18/L25 subcomplex. Contacts the 5S rRNA and the P site tRNA. Forms a bridge to the 30S subunit in the 70S ribosome.

Functionally, this is one of the proteins that bind and probably mediate the attachment of the 5S RNA into the large ribosomal subunit, where it forms part of the central protuberance. In the 70S ribosome it contacts protein S13 of the 30S subunit (bridge B1b), connecting the 2 subunits; this bridge is implicated in subunit movement. Contacts the P site tRNA; the 5S rRNA and some of its associated proteins might help stabilize positioning of ribosome-bound tRNAs. This chain is Large ribosomal subunit protein uL5, found in Hamiltonella defensa subsp. Acyrthosiphon pisum (strain 5AT).